The following is a 132-amino-acid chain: MRHGHGLRKLNRTSEHRLAMLRNMMNSLIEHEVIKTTLPKAKELRRVVEPMITLAKEATVANRRLAFDRLRDRDSVVKLFNDLGPRFKARPGGYTRILKMGFRVGDNAPMALVELVDRAELAEAPTDEKSED.

It belongs to the bacterial ribosomal protein bL17 family. Part of the 50S ribosomal subunit. Contacts protein L32.

The polypeptide is Large ribosomal subunit protein bL17 (Albidiferax ferrireducens (strain ATCC BAA-621 / DSM 15236 / T118) (Rhodoferax ferrireducens)).